The sequence spans 511 residues: Cobyric acid synthase (511 aa).

The 193-residue stretch at 251–443 (LLDIAIICLP…IHGIFDNDVF (193 aa)) folds into the GATase cobBQ-type domain. The Nucleophile role is filled by cysteine 332. Histidine 435 is an active-site residue.

The protein belongs to the CobB/CobQ family. CobQ subfamily.

The protein operates within cofactor biosynthesis; adenosylcobalamin biosynthesis. Its function is as follows. Catalyzes amidations at positions B, D, E, and G on adenosylcobyrinic A,C-diamide. NH(2) groups are provided by glutamine, and one molecule of ATP is hydrogenolyzed for each amidation. In Listeria monocytogenes serotype 4b (strain F2365), this protein is Cobyric acid synthase.